A 697-amino-acid chain; its full sequence is Putative ATP-dependent RNA helicase an3 (697 aa).

Residues 27 to 189 (ESGVAGTKGR…PLAPNDRVEQ (163 aa)) are disordered. 3 stretches are compositionally biased toward basic and acidic residues: residues 89 to 111 (GRSD…DKDA), 135 to 144 (RRTDDRRQDG), and 151 to 170 (RSDK…WSDD). A Q motif motif is present at residues 221–249 (ESFHDVTMGEIIMGNIQLTRYTRPTPVQK). Residues 241 to 248 (YTRPTPVQ) and 265 to 272 (AQTGSGKT) contribute to the ATP site. The 193-residue stretch at 252-444 (IPIIIEKRDL…RDFLDEYIFL (193 aa)) folds into the Helicase ATP-binding domain. Positions 388–391 (DEAD) match the DEAD box motif. A Helicase C-terminal domain is found at 455–616 (NITQKVVWVE…EVPSWLENMA (162 aa)). The disordered stretch occupies residues 619–666 (QHHKSSSRGRSKSRFSGGFGAKDYRQSSGAGSSFGSSRGGRSSGHGGS). The span at 622–631 (KSSSRGRSKS) shows a compositional bias: basic residues. Positions 645 to 654 (SSGAGSSFGS) are enriched in low complexity. The span at 655-666 (SRGGRSSGHGGS) shows a compositional bias: gly residues.

It belongs to the DEAD box helicase family. DDX3/DED1 subfamily.

It localises to the cell membrane. The protein localises to the nucleus. The protein resides in the cytoplasm. It is found in the stress granule. Its subcellular location is the inflammasome. It localises to the cell projection. The protein localises to the lamellipodium. The catalysed reaction is ATP + H2O = ADP + phosphate + H(+). Functionally, multifunctional ATP-dependent RNA helicase. The ATPase activity can be stimulated by various ribo-and deoxynucleic acids indicative for a relaxed substrate specificity. In vitro can unwind partially double-stranded DNA with a preference for 5'-single-stranded DNA overhangs. Involved in many cellular processes, which do not necessarily require its ATPase/helicase catalytic activities. Involved in the regulation of transcription and translation initiation. Involved in innate immunity. Involved in both stress and inflammatory responses. May negatively regulate extrinsic apoptotic signaling pathway via death domain receptors. May be involved in mitotic chromosome segregation. Required for canonical Wnt signaling involved in anteroposterior neural patterning. In Xenopus laevis (African clawed frog), this protein is Putative ATP-dependent RNA helicase an3 (an3).